The chain runs to 715 residues: ATP-dependent DNA helicase Hel308 (715 aa).

The Q motif motif lies at 1 to 29; sequence MKVGELNVSEKIKEILRERGIEELYPPQA. ATP contacts are provided by residues Gln28 and 46–53; that span reads IPTASGKT. Positions 33–197 constitute a Helicase ATP-binding domain; it reads TSGVLEGENL…WLNAKLIRSD (165 aa). The short motif at 145–148 is the DEAH box element; that stretch reads DEIH. The Helicase C-terminal domain maps to 226 to 422; the sequence is WEELVYDAVK…ILRSQILALI (197 aa).

It belongs to the helicase family. Hel308 subfamily. In terms of assembly, monomer.

It carries out the reaction Couples ATP hydrolysis with the unwinding of duplex DNA by translocating in the 3'-5' direction.. The catalysed reaction is ATP + H2O = ADP + phosphate + H(+). Functionally, DNA-dependent ATPase and 3'-5' DNA helicase that may be involved in repair of stalled replication forks. Rapidly unwinds double-stranded (ds)DNA with a 3'-overhang, has no strand reannealing capabilities. Binds single-stranded (ss)DNA, dsDNA with a 3'-overhang and ssRNA. The sequence is that of ATP-dependent DNA helicase Hel308 from Pyrococcus abyssi (strain GE5 / Orsay).